The chain runs to 312 residues: Olfactory receptor 51B2 (312 aa).

Residues 1–23 lie on the Extracellular side of the membrane; that stretch reads MWPNITAAPFLLTGFPGLEAAHH. N-linked (GlcNAc...) asparagine glycosylation occurs at Asn-4. The helical transmembrane segment at 24–44 threads the bilayer; the sequence is WISIPFFAVYVCILLGNGMLL. The Cytoplasmic segment spans residues 45-52; the sequence is YLIKHDHS. The helical transmembrane segment at 53–73 threads the bilayer; sequence LHEPMYYFLTMLAGTDLMVTL. Residues 74–97 are Extracellular-facing; sequence TTMPTVMGILWVNHREISSVGCFL. Residues Cys-95 and Cys-187 are joined by a disulfide bond. Residues 98-118 traverse the membrane as a helical segment; the sequence is QAYFIHSLSVVESGSLLAMAY. The Cytoplasmic portion of the chain corresponds to 119-137; the sequence is DCFIAIRNPLRYASILTNT. Residues 138–158 traverse the membrane as a helical segment; sequence RVIALGVGVFLRGFVSILPVI. Topologically, residues 159–194 are extracellular; the sequence is LRLFSFSYCKSHVITRAFCLHQEIMRLACADITFNR. The chain crosses the membrane as a helical span at residues 195-215; sequence LYPVILISLTIFLDCLIILFS. The Cytoplasmic portion of the chain corresponds to 216-235; it reads YILILNTVIGIASGEERAKA. A helical transmembrane segment spans residues 236–256; it reads LNTCISHISCVLIFYVTVMGL. Topologically, residues 257 to 271 are extracellular; sequence TFIYRFGKNVPEVVH. Residues 272 to 292 form a helical membrane-spanning segment; that stretch reads IIMSYIYFLFPPLMNPVIYSI. The Cytoplasmic segment spans residues 293–312; sequence KTKQIQYGIIRLLSKHRFSS.

Belongs to the G-protein coupled receptor 1 family. In terms of processing, ubiquitinated by the CRL2(FEM1A) and CRL2(FEM1C) complexes, which recognize the -Lys-Xaa-Xaa-Arg C-degron at the C-terminus, leading to its degradation.

It is found in the cell membrane. In terms of biological role, odorant receptor. The protein is Olfactory receptor 51B2 (OR51B2) of Homo sapiens (Human).